The sequence spans 145 residues: Large ribosomal subunit protein uL13 (145 aa).

It belongs to the universal ribosomal protein uL13 family. As to quaternary structure, part of the 50S ribosomal subunit.

This protein is one of the early assembly proteins of the 50S ribosomal subunit, although it is not seen to bind rRNA by itself. It is important during the early stages of 50S assembly. The protein is Large ribosomal subunit protein uL13 of Halobacterium salinarum (strain ATCC 700922 / JCM 11081 / NRC-1) (Halobacterium halobium).